Consider the following 449-residue polypeptide: MNKMLYIKTYGCQMNVYDSNRMVDLLETQGYNIVANMADASVIILNTCHIREKASEKMYSELGRIKKLQQSRLKAGKSKAKIIVAGCVGQAEGEEIFIREPAVNIIVGPQSYYNLPTMLEKLDSGTENHLIDLDFVEAAKFNKLPEVLKSPTVSGLVSVQEGCDKFCTFCVVPYTRGAEFSRPLEQVYREVLNIAQQGAKEVVLVGQNVSAYHGKDENGKECSLADLIKYVAKIDKIKRIRYITSHPNDMTDQLLSLHATEEKLMPFLHLPVQSGSNKILKLMNRRHTRERYLEIIQQLRELRPDIVISSDIIVGFPGEDDEDFEATLSLAKEAKFGQCYSFKYSQRPGTPAAVKQQISEEVKQHRLSILQAQLMLQQLECNQKLIGKVVPVLFDRDGKYDGQIIGKTPYMQSVCIMNEKDNNLYGKIVNVKILSASASSLFGEVCPNS.

An MTTase N-terminal domain is found at 3–124 (KMLYIKTYGC…LPTMLEKLDS (122 aa)). 6 residues coordinate [4Fe-4S] cluster: Cys-12, Cys-48, Cys-87, Cys-163, Cys-167, and Cys-170. A Radical SAM core domain is found at 149–380 (KSPTVSGLVS…QAQLMLQQLE (232 aa)). In terms of domain architecture, TRAM spans 383 to 447 (QKLIGKVVPV…ASSLFGEVCP (65 aa)).

The protein belongs to the methylthiotransferase family. MiaB subfamily. Monomer. The cofactor is [4Fe-4S] cluster.

It localises to the cytoplasm. The catalysed reaction is N(6)-dimethylallyladenosine(37) in tRNA + (sulfur carrier)-SH + AH2 + 2 S-adenosyl-L-methionine = 2-methylsulfanyl-N(6)-dimethylallyladenosine(37) in tRNA + (sulfur carrier)-H + 5'-deoxyadenosine + L-methionine + A + S-adenosyl-L-homocysteine + 2 H(+). Catalyzes the methylthiolation of N6-(dimethylallyl)adenosine (i(6)A), leading to the formation of 2-methylthio-N6-(dimethylallyl)adenosine (ms(2)i(6)A) at position 37 in tRNAs that read codons beginning with uridine. The sequence is that of tRNA-2-methylthio-N(6)-dimethylallyladenosine synthase from Orientia tsutsugamushi (strain Boryong) (Rickettsia tsutsugamushi).